Consider the following 130-residue polypeptide: Small ribosomal subunit protein uS9 (130 aa).

This sequence belongs to the universal ribosomal protein uS9 family.

The chain is Small ribosomal subunit protein uS9 from Verminephrobacter eiseniae (strain EF01-2).